The chain runs to 287 residues: Cell division protein ZipA (287 aa).

Met-1 is a topological domain (periplasmic). The chain crosses the membrane as a helical span at residues 2-22 (EIGLREWLIVIGIIVIAGILF). Residues 23-287 (DGWRRMRGGK…FERRALTQKR (265 aa)) are Cytoplasmic-facing. Positions 70 to 143 (LDEHDLPSMS…APRQSVNDQP (74 aa)) are disordered.

The protein belongs to the ZipA family. Interacts with FtsZ via their C-terminal domains.

The protein localises to the cell inner membrane. Its function is as follows. Essential cell division protein that stabilizes the FtsZ protofilaments by cross-linking them and that serves as a cytoplasmic membrane anchor for the Z ring. Also required for the recruitment to the septal ring of downstream cell division proteins. The polypeptide is Cell division protein ZipA (Pseudomonas fluorescens (strain SBW25)).